Here is a 139-residue protein sequence, read N- to C-terminus: Large-conductance mechanosensitive channel (139 aa).

The next 2 helical transmembrane spans lie at 17–37 (VVDM…VTSL) and 88–108 (TVDF…IMAA).

The protein belongs to the MscL family. In terms of assembly, homopentamer.

The protein resides in the cell inner membrane. Channel that opens in response to stretch forces in the membrane lipid bilayer. May participate in the regulation of osmotic pressure changes within the cell. This Porphyromonas gingivalis (strain ATCC 33277 / DSM 20709 / CIP 103683 / JCM 12257 / NCTC 11834 / 2561) protein is Large-conductance mechanosensitive channel.